Here is a 441-residue protein sequence, read N- to C-terminus: MEKAGSTDFHVKKFDPVMVAPSLPSPKATVQLSVVDSLTICRGIFNTLLVFNAPDNISADPVKIIREALSKVLVYYFPLAGRLRSKEIGELEVECTGDGALFVEAMVEDTISVLRDLDDLNPSFQQLVFWHPLDTAIEDLHLVIVQVTRFTCGGIAVGVTLPHSVCDGRGAAQFVTALAEMARGEVKPSLEPIWNRELLNPEDPLHLQLNQFDSICPPPMLEELGQASFVINVDTIEYMKQCVMEECNEFCSSFEVVAALVWIARTKALQIPHTENVKLLFAMDLRKLFNPPLPNGYYGNAIGTAYAMDNVQDLLNGSLLRAIMIIKKAKADLKDNYSRSRVVTNPYSLDVNKKSDNILALSDWRRLGFYEADFGWGGPLNVSSLQRLENGLPMFSTFLYLLPAKNKSDGIKLLLSCMPPTTLKSFKIVMEAMIEKYVSKV.

Catalysis depends on proton acceptor residues H163 and D373.

Belongs to the plant acyltransferase family.

It carries out the reaction 3'-N-debenzoyltaxol + benzoyl-CoA = paclitaxel + CoA + H(+). The protein operates within alkaloid biosynthesis; taxol biosynthesis. In terms of biological role, catalyzes the stereoselective coupling of the surrogate substrate N-debenzoyl-(3'RS)-2'-deoxytaxol with benzoyl-CoA to form predominantly one 3'-epimer of 2'-deoxytaxol. This enzymatic reaction constitutes the final acylation in the taxol biosynthetic pathway. The chain is 3'-N-debenzoyl-2'-deoxytaxol N-benzoyltransferase from Taxus canadensis (Canadian yew).